We begin with the raw amino-acid sequence, 102 residues long: UPF0213 protein XAC3202 (102 aa).

The region spanning 5-80 (KPWHLYLLLC…KRLPRARKLA (76 aa)) is the GIY-YIG domain.

The protein belongs to the UPF0213 family.

This is UPF0213 protein XAC3202 from Xanthomonas axonopodis pv. citri (strain 306).